The following is a 350-amino-acid chain: Ion-translocating oxidoreductase complex subunit D (350 aa).

4 helical membrane-spanning segments follow: residues 36 to 56 (FYFF…IALL), 68 to 88 (PIIS…IGVS), 89 to 109 (IPSI…IVIV), and 120 to 140 (IFNP…VQMT). At threonine 185 the chain carries FMN phosphoryl threonine. 5 consecutive transmembrane segments (helical) span residues 212–232 (GFGV…LAML), 239–259 (WQIS…GYLL), 265–285 (IGPL…FIAT), 291–311 (ATSV…VYVI), and 315–335 (GGYP…APFI).

This sequence belongs to the NqrB/RnfD family. In terms of assembly, the complex is composed of six subunits: RnfA, RnfB, RnfC, RnfD, RnfE and RnfG. FMN serves as cofactor.

The protein resides in the cell inner membrane. In terms of biological role, part of a membrane-bound complex that couples electron transfer with translocation of ions across the membrane. This Shewanella piezotolerans (strain WP3 / JCM 13877) protein is Ion-translocating oxidoreductase complex subunit D.